We begin with the raw amino-acid sequence, 492 residues long: MKISNLLAAFLAFSGGFFCASAEVPKVNKEGLNELITADKVLMVKFYAPWCGHCKALAPEYESAADELEKDGISLVEVDCTEEGDLCSEYSIRGYPTLNVFKNGKQISQYSGPRKHDALVKYMRKQLLPTVKPISKDTLENFVEKADDLAVVAFFKDQKLNDTYTEVAEVMKDDFVFAASDDKELAKSLGSNFPGIVAFTKDAAQDSDKLVYTGDWDPASIADFIGVSSIPLLDELNQMTFGKYQQSGLPLGIIFYNSTESRDELYDVFQPLAKKYQDTLRFAFLDAVRYGAVAKQMNVESDWPAFVIANLKSMLKYPFPTTELTAKAMTKFVGDFVDGKLQPKIKSQPIPESQEDLVVLVADNFDDIVMDETKDVLVEFYAPWCGHCKNLAPTYEKLAEEYSDDSNVVVAKIDATENDISVSISGFPTIMFFKANDKVNPVRYEGDRTLEDLSAFIDKHASFEPIKKEKESVPAPDLEDQVAVEDEMADEL.

An N-terminal signal peptide occupies residues Met-1–Ala-22. The region spanning Glu-23 to Leu-128 is the Thioredoxin 1 domain. Residues Cys-51 and Cys-54 each act as nucleophile in the active site. Cys-51 and Cys-54 form a disulfide bridge. N-linked (GlcNAc...) asparagine glycans are attached at residues Asn-161 and Asn-257. Residues Glu-323 to Ser-462 form the Thioredoxin 2 domain. Residues Cys-385 and Cys-388 each act as nucleophile in the active site. Cys-385 and Cys-388 are joined by a disulfide. Residues Lys-468 to Leu-492 form a disordered region. A compositionally biased stretch (acidic residues) spans Asp-477–Leu-492. Residues Ala-489 to Leu-492 carry the Prevents secretion from ER motif.

Belongs to the protein disulfide isomerase family.

It localises to the endoplasmic reticulum lumen. The catalysed reaction is Catalyzes the rearrangement of -S-S- bonds in proteins.. Participates in the folding of proteins containing disulfide bonds, may be involved in glycosylation, prolyl hydroxylation and triglyceride transfer. This Schizosaccharomyces pombe (strain 972 / ATCC 24843) (Fission yeast) protein is Putative protein disulfide-isomerase C1F5.02.